The following is a 504-amino-acid chain: MRELIKEAVNSLDSALELRKLIIKKLNEKKLKESDIIEIVDAVDDLSLEEIQKLGSNLRTFPMGCDLVEIAVGPCSSSLTLIQFIENCILTDYMGFPIHICSYAVADIAEKEGLKPIEVLKMVLENVDVPIDIDHFGMYGPMRFPKEITHCYGDCYFKGPPFKGCPRNRIHKRLIEKEKEHADEFEDWIKLASTLCINVVEEQGGEEHAAPLEEMKIVAETAKKYGKGLEGIFHIGDGYDDLITGIKACIDLDVDVFVVEGAPFNRAKNRLKAFAKAIAVSRILVKGGVVATNGAYEDECRVGLRSGLNTILTGFPLNHHGYMCGYSPKTAKRGNFGLRRVMRIIKEEIRAGNVNATFIDKDMVKAIALGNRFLKGNIYPYSIGGFYLGDAHWAAIKESNLCKKLKINKTIDDISAEKVGLIGGRYISWAIAEKAEEVYISDTDSWVEKATIKILNEAGINAYPCNGDDKKVLEADKAYITTFIPNIALKILNKLRDSKVELLI.

This sequence to M.thermoautotrophicum MTH1137.

This is an uncharacterized protein from Methanocaldococcus jannaschii (strain ATCC 43067 / DSM 2661 / JAL-1 / JCM 10045 / NBRC 100440) (Methanococcus jannaschii).